A 172-amino-acid polypeptide reads, in one-letter code: MERAVQGGDAREQANSERWDGGCGGTITPFKLSDESPSLHEWRLHHSEEGEDQDHPLGFKESWSFGKVVFKRYLRYGGTETSLHRALGSWERNTVNNAASRFLGFGQIGCTYSIRFRGSCLTISGGSRTLQRLIEMAIRTKCTVLQLTPSEVEGNVSGGSPEGIEAFEKESE.

Residues 153 to 172 (EGNVSGGSPEGIEAFEKESE) are disordered.

It belongs to the tombusvirus protein p19 family. In terms of assembly, homodimer.

Functionally, viral suppressor of RNA silencing which binds specifically to silencing RNAs (siRNAs). Acts as a molecular caliper to specifically select siRNAs based on the length of the duplex region of the RNA. The sequence is that of RNA silencing suppressor p19 from Pelargonium zonale (PeNSV).